The chain runs to 189 residues: MLYLASRSLCRRQLLQRLDIPFQVIDLEIPEVRREDELPQDYVRRVAQEKAQVGLARVGDAFAPKVLGADTEVVLDGRVFGKPVDLAEAATMLAALSGRTHQVMTAVSLVAAGGVAAQVLVVSEVSFALLSQGQIARYVDSGEPMGKAGAYAIQGRGECFVSRLVGSYSGVMGLPLQQTAQLLATFEES.

The Proton acceptor role is filled by aspartate 70.

It belongs to the Maf family. Requires a divalent metal cation as cofactor.

Its subcellular location is the cytoplasm. It carries out the reaction a ribonucleoside 5'-triphosphate + H2O = a ribonucleoside 5'-phosphate + diphosphate + H(+). The enzyme catalyses a 2'-deoxyribonucleoside 5'-triphosphate + H2O = a 2'-deoxyribonucleoside 5'-phosphate + diphosphate + H(+). Nucleoside triphosphate pyrophosphatase. May have a dual role in cell division arrest and in preventing the incorporation of modified nucleotides into cellular nucleic acids. In Xylella fastidiosa (strain M23), this protein is Nucleoside triphosphate pyrophosphatase.